The sequence spans 311 residues: tRNA dimethylallyltransferase (311 aa).

11-18 (GPTASGKS) serves as a coordination point for ATP. 13-18 (TASGKS) contributes to the substrate binding site. 2 interaction with substrate tRNA regions span residues 36–39 (DSMQ) and 160–164 (QRLIR).

It belongs to the IPP transferase family. As to quaternary structure, monomer. The cofactor is Mg(2+).

The enzyme catalyses adenosine(37) in tRNA + dimethylallyl diphosphate = N(6)-dimethylallyladenosine(37) in tRNA + diphosphate. Its function is as follows. Catalyzes the transfer of a dimethylallyl group onto the adenine at position 37 in tRNAs that read codons beginning with uridine, leading to the formation of N6-(dimethylallyl)adenosine (i(6)A). This chain is tRNA dimethylallyltransferase, found in Rickettsia prowazekii (strain Madrid E).